Here is a 116-residue protein sequence, read N- to C-terminus: Ferredoxin (116 aa).

4Fe-4S ferredoxin-type domains follow at residues 2–31 (TYVV…EGER) and 35–64 (FMLV…PESP). The [3Fe-4S] cluster site is built by Cys9 and Cys17. Residues Cys21, Cys44, Cys47, and Cys50 each coordinate [4Fe-4S] cluster. A [3Fe-4S] cluster-binding site is contributed by Cys54.

[4Fe-4S] cluster serves as cofactor. [3Fe-4S] cluster is required as a cofactor.

Ferredoxins are iron-sulfur proteins that transfer electrons in a wide variety of metabolic reactions. The polypeptide is Ferredoxin (fdxA) (Rickettsia conorii (strain ATCC VR-613 / Malish 7)).